Consider the following 114-residue polypeptide: Iron-sulfur cluster insertion protein ErpA (114 aa).

Cysteine 42, cysteine 106, and cysteine 108 together coordinate iron-sulfur cluster.

Belongs to the HesB/IscA family. Homodimer. Iron-sulfur cluster serves as cofactor.

Its function is as follows. Required for insertion of 4Fe-4S clusters for at least IspG. This is Iron-sulfur cluster insertion protein ErpA from Edwardsiella ictaluri (strain 93-146).